A 698-amino-acid chain; its full sequence is MRLAVGALLVCAVLGLCLAVPDKTVRWCAVSEHEATKCQSFRDHMKSVIPSDGPSVACVKKASYLDCIRAIAANEADAVTLDAGLVYDAYLAPNNLKPVVAEFYGSKEDPQTFYYAVAVVKKDSGFQMNQLRGKKSCHTGLGRSAGWNIPIGLLYCDLPEPRKPLEKAVANFFSGSCAPCADGTDFPQLCQLCPGCGCSTLNQYFGYSGAFKCLKDGAGDVAFVKHSTIFENLANKADRDQYELLCLDNTRKPVDEYKDCHLAQVPSHTVVARSMGGKEDLIWELLNQAQEHFGKDKSKEFQLFSSPHGKDLLFKDSAHGFLKVPPRMDAKMYLGYEYVTAIRNLREGTCPEATTDECKPVKWCALSHHERLKCDEWSVNSVGKIECVSAETTEDCIAKIMNGEADAMSLDGGFVYIAGKCGLVPVLAENYNKNDNCEDTPEAGYFAVAVVKKSASDLTWDNLKGKKSCHTAVGRTAGWNIPMGLLYNKINHCRFDEFFSEGCAPGSKKDSSLCKLCMGSGPNLCEPNNKEGYYGYTGAFRCLVEKGDVAFVKHQTVPQNTGGKNPDPWAKNLNEKDYELLCLDGTRKPVKEYANCHLARAPNHAVVTRKDKEACVHKILRQQQHLFGSNVTDCSGNFCLFRSETKDLLFRDDTVCLAKLHDRNTYEKYLGEEYVKAVGNLRKCSTSSLLEACTFRRP.

A signal peptide spans 1–19 (MRLAVGALLVCAVLGLCLA). 2 Transferrin-like domains span residues 25-347 (VRWC…NLRE) and 361-683 (VKWC…NLRK). 2 cysteine pairs are disulfide-bonded: C28–C67 and C38–C58. R42 is modified (dimethylated arginine). O-linked (GalNAc...) serine glycosylation is present at S51. Fe(3+) is bound by residues D82 and Y114. Cystine bridges form between C137-C213, C156-C350, C177-C193, C180-C196, C190-C198, C246-C260, C358-C615, C364-C396, C374-C387, C421-C693, C437-C656, C469-C542, C493-C684, C503-C517, C514-C525, C582-C596, and C634-C639. Hydrogencarbonate is bound by residues T139, R143, A145, and G146. Y207 contacts Fe(3+). H268 serves as a coordination point for Fe(3+). The residue at position 389 (S389) is a Phosphoserine. Residues D411 and Y445 each contribute to the Fe(3+) site. T471, R475, A477, and G478 together coordinate hydrogencarbonate. Y536 is a binding site for Fe(3+). Position 604 (H604) interacts with Fe(3+). N630 carries N-linked (GlcNAc...) asparagine glycosylation. S685 is modified (phosphoserine).

Belongs to the transferrin family. As to quaternary structure, monomer. Part of a complex composed of SLC40A1/ferroportin, TF/transferrin and HEPH/hephaestin that transfers iron from cells to transferrin. In terms of tissue distribution, expressed by the liver and secreted in plasma.

It localises to the secreted. In terms of biological role, transferrins are iron binding transport proteins which can bind two Fe(3+) ions in association with the binding of an anion, usually bicarbonate. It is responsible for the transport of iron from sites of absorption and heme degradation to those of storage and utilization. Serum transferrin may also have a further role in stimulating cell proliferation. This Pan troglodytes (Chimpanzee) protein is Serotransferrin (TF).